A 168-amino-acid polypeptide reads, in one-letter code: Large ribosomal subunit protein uL29c (168 aa).

The disordered stretch occupies residues 1-20 (MLAIHSLSSTPCSSGLTSPP). A chloroplast-targeting transit peptide spans 1–58 (MLAIHSLSSTPCSSGLTSPPKSTLLTKSSFHGLRLPSVNLSSSLRLRVQTPPSSVVVM).

In terms of assembly, component of the chloroplast large ribosomal subunit (LSU). Mature 70S chloroplast ribosomes of higher plants consist of a small (30S) and a large (50S) subunit. The 30S small subunit contains 1 molecule of ribosomal RNA (16S rRNA) and 24 different proteins. The 50S large subunit contains 3 rRNA molecules (23S, 5S and 4.5S rRNA) and 33 different proteins.

It localises to the plastid. The protein resides in the chloroplast. Functionally, component of the chloroplast ribosome (chloro-ribosome), a dedicated translation machinery responsible for the synthesis of chloroplast genome-encoded proteins, including proteins of the transcription and translation machinery and components of the photosynthetic apparatus. The sequence is that of Large ribosomal subunit protein uL29c (RPL29) from Spinacia oleracea (Spinach).